The chain runs to 244 residues: Biosynthetic peptidoglycan transglycosylase (244 aa).

A helical transmembrane segment spans residues 23–43 (LVVIGAWLAGILLFSFLPVPF).

This sequence belongs to the glycosyltransferase 51 family.

It is found in the cell inner membrane. The catalysed reaction is [GlcNAc-(1-&gt;4)-Mur2Ac(oyl-L-Ala-gamma-D-Glu-L-Lys-D-Ala-D-Ala)](n)-di-trans,octa-cis-undecaprenyl diphosphate + beta-D-GlcNAc-(1-&gt;4)-Mur2Ac(oyl-L-Ala-gamma-D-Glu-L-Lys-D-Ala-D-Ala)-di-trans,octa-cis-undecaprenyl diphosphate = [GlcNAc-(1-&gt;4)-Mur2Ac(oyl-L-Ala-gamma-D-Glu-L-Lys-D-Ala-D-Ala)](n+1)-di-trans,octa-cis-undecaprenyl diphosphate + di-trans,octa-cis-undecaprenyl diphosphate + H(+). The protein operates within cell wall biogenesis; peptidoglycan biosynthesis. Peptidoglycan polymerase that catalyzes glycan chain elongation from lipid-linked precursors. The polypeptide is Biosynthetic peptidoglycan transglycosylase (Pectobacterium carotovorum subsp. carotovorum (strain PC1)).